The primary structure comprises 602 residues: uncharacterized protein (602 aa).

It belongs to the IIV-6 098R family.

This is an uncharacterized protein from Acheta domesticus (House cricket).